A 349-amino-acid polypeptide reads, in one-letter code: N-lysine methyltransferase KMT5A (349 aa).

Residues 18–46 (AAVAATAPGPEMVEQRGPGRPRSDGENVF) are disordered. Ser57 carries the phosphoserine modification. Residues 65–207 (RSPLQEENSV…SEERKKNELI (143 aa)) are disordered. Residues 107–119 (VKSDEQKSKDTRR) show a composition bias toward basic and acidic residues. Thr138 carries the post-translational modification Phosphothreonine. The segment covering 154-170 (ALKKSLKGKQAPRKKSQ) has biased composition (basic residues). Positions 192–207 (SKAELQSEERKKNELI) are enriched in basic and acidic residues. Residues 213–334 (EGMKIDLIDG…AGEELLYDYG (122 aa)) form the SET domain. Residues 223-225 (KGR), Tyr268, and 295-296 (NH) contribute to the S-adenosyl-L-methionine site.

The protein belongs to the class V-like SAM-binding methyltransferase superfamily. Histone-lysine methyltransferase family. PR/SET subfamily. In terms of assembly, interacts with L3MBTL1. Interacts with SIRT2 (phosphorylated form); the interaction is direct, stimulates KMT5A-mediated methyltransferase activity at histone H4 'Lys-20' (H4K20me1) and is increased in a H(2)O(2)-induced oxidative stress-dependent manner. Ubiquitinated and degraded by the DCX(DTL) complex.

The protein localises to the nucleus. Its subcellular location is the chromosome. The enzyme catalyses L-lysyl(20)-[histone H4] + S-adenosyl-L-methionine = N(6)-methyl-L-lysyl(20)-[histone H4] + S-adenosyl-L-homocysteine + H(+). The catalysed reaction is L-lysyl-[protein] + S-adenosyl-L-methionine = N(6)-methyl-L-lysyl-[protein] + S-adenosyl-L-homocysteine + H(+). In terms of biological role, protein-lysine N-methyltransferase that monomethylates both histones and non-histone proteins. Specifically monomethylates 'Lys-20' of histone H4 (H4K20me1). H4K20me1 is enriched during mitosis and represents a specific tag for epigenetic transcriptional repression. Mainly functions in euchromatin regions, thereby playing a central role in the silencing of euchromatic genes. Required for cell proliferation, probably by contributing to the maintenance of proper higher-order structure of DNA during mitosis. Involved in chromosome condensation and proper cytokinesis. Nucleosomes are preferred as substrate compared to free histones. Mediates monomethylation of p53/TP53 at 'Lys-382', leading to repress p53/TP53-target genes. Plays a negative role in TGF-beta response regulation and a positive role in cell migration. The polypeptide is N-lysine methyltransferase KMT5A (Mus musculus (Mouse)).